A 336-amino-acid chain; its full sequence is Biotin synthase (336 aa).

The region spanning 54–281 (NAIQLSTLLS…KAMVRLSAGR (228 aa)) is the Radical SAM core domain. [4Fe-4S] cluster contacts are provided by Cys-69, Cys-73, and Cys-76. Residues Cys-113, Cys-144, Cys-204, and Arg-276 each contribute to the [2Fe-2S] cluster site.

Belongs to the radical SAM superfamily. Biotin synthase family. In terms of assembly, homodimer. Requires [4Fe-4S] cluster as cofactor. [2Fe-2S] cluster serves as cofactor.

It carries out the reaction (4R,5S)-dethiobiotin + (sulfur carrier)-SH + 2 reduced [2Fe-2S]-[ferredoxin] + 2 S-adenosyl-L-methionine = (sulfur carrier)-H + biotin + 2 5'-deoxyadenosine + 2 L-methionine + 2 oxidized [2Fe-2S]-[ferredoxin]. It functions in the pathway cofactor biosynthesis; biotin biosynthesis; biotin from 7,8-diaminononanoate: step 2/2. Catalyzes the conversion of dethiobiotin (DTB) to biotin by the insertion of a sulfur atom into dethiobiotin via a radical-based mechanism. In Burkholderia mallei (strain ATCC 23344), this protein is Biotin synthase.